Here is a 424-residue protein sequence, read N- to C-terminus: Mitogen-activated protein kinase mpkA (424 aa).

The 292-residue stretch at 23 to 314 (YNVTKELGQG…VEEALEHPYL (292 aa)) folds into the Protein kinase domain. ATP contacts are provided by residues 29 to 37 (LGQGAYGIV) and lysine 52. Positions 375-424 (QQIAQQTNVPIPDHQQGGWKQEEPKPQEVHAAGGHVNDLESSLQRGMDVQ) are disordered.

The protein belongs to the protein kinase superfamily. Ser/Thr protein kinase family. In terms of assembly, interacts with flbB, flbC, brlA, and rasB. Interacts with fmqA and fmqC. Interacts with hsp90. Requires Mg(2+) as cofactor. Post-translationally, phosphorylated by the upstreamm MAPKK mkk2. Phosphorylation is induced during asexual development. Phosphorylation is regulated by rlmA.

The catalysed reaction is L-seryl-[protein] + ATP = O-phospho-L-seryl-[protein] + ADP + H(+). The enzyme catalyses L-threonyl-[protein] + ATP = O-phospho-L-threonyl-[protein] + ADP + H(+). With respect to regulation, activated by threonine and tyrosine phosphorylation by the upstreamm MAPKK mkk2. Mitogen-activated protein kinase; part of cell wall integrity (CWI) signaling pathway composed of pkcA, the bck1-mkk2-mpka MAPK cascade and the downstream rlmA transcription regulator. The CWI signaling pathway regulates cell wall integrity and pyomelanin formation. CWI also controls oxidative stress response, gliotoxin production, iron adaptation and asexual development. Finally, CWI is constitutively required for A.fumigatus to cope with the temperature increase found in the mammalian lung environment, during infection. MpkA positively modulates the expression of fumiquinazoline cluster during conidiogenesis and directly phosphorylates fmqC, and perhaps also fmqA. In Aspergillus fumigatus (strain ATCC MYA-4609 / CBS 101355 / FGSC A1100 / Af293) (Neosartorya fumigata), this protein is Mitogen-activated protein kinase mpkA.